A 455-amino-acid polypeptide reads, in one-letter code: tRNA modification GTPase MnmE (455 aa).

Residues Arg-24, Glu-81, and Lys-120 each coordinate (6S)-5-formyl-5,6,7,8-tetrahydrofolate. The TrmE-type G domain occupies 216–378 (GMTVVIAGRP…LREHLKACMG (163 aa)). Position 226 (Asn-226) interacts with K(+). GTP-binding positions include 226-231 (NAGKSS), 245-251 (TDIAGTT), 270-273 (DTAG), 335-338 (NKAD), and 359-361 (SAR). Residue Ser-230 participates in Mg(2+) binding. K(+)-binding residues include Thr-245, Ile-247, and Thr-250. Position 251 (Thr-251) interacts with Mg(2+). Lys-455 contributes to the (6S)-5-formyl-5,6,7,8-tetrahydrofolate binding site.

The protein belongs to the TRAFAC class TrmE-Era-EngA-EngB-Septin-like GTPase superfamily. TrmE GTPase family. In terms of assembly, homodimer. Heterotetramer of two MnmE and two MnmG subunits. The cofactor is K(+).

It is found in the cytoplasm. Its function is as follows. Exhibits a very high intrinsic GTPase hydrolysis rate. Involved in the addition of a carboxymethylaminomethyl (cmnm) group at the wobble position (U34) of certain tRNAs, forming tRNA-cmnm(5)s(2)U34. In Pseudomonas paraeruginosa (strain DSM 24068 / PA7) (Pseudomonas aeruginosa (strain PA7)), this protein is tRNA modification GTPase MnmE.